Consider the following 118-residue polypeptide: Large ribosomal subunit protein mL53 (118 aa).

A disordered region spans residues 99-118 (AAAASAPGADKVAPGTSTRR).

Belongs to the mitochondrion-specific ribosomal protein mL53 family. In terms of assembly, component of the mitochondrial ribosome large subunit (39S) which comprises a 16S rRNA and about 50 distinct proteins.

Its subcellular location is the mitochondrion. The protein is Large ribosomal subunit protein mL53 (Mrpl53) of Mus musculus (Mouse).